Reading from the N-terminus, the 123-residue chain is Large ribosomal subunit protein eL8 (123 aa).

Belongs to the eukaryotic ribosomal protein eL8 family. As to quaternary structure, part of the 50S ribosomal subunit. Probably part of the RNase P complex.

It localises to the cytoplasm. Its function is as follows. Multifunctional RNA-binding protein that recognizes the K-turn motif in ribosomal RNA, the RNA component of RNase P, box H/ACA, box C/D and box C'/D' sRNAs. The protein is Large ribosomal subunit protein eL8 of Methanopyrus kandleri (strain AV19 / DSM 6324 / JCM 9639 / NBRC 100938).